A 466-amino-acid chain; its full sequence is Cysteine--tRNA ligase (466 aa).

Cysteine 29 contacts Zn(2+). The 'HIGH' region signature appears at 31–41 (PTVYNYIHIGN). Residues cysteine 209, histidine 234, and glutamate 238 each coordinate Zn(2+). The 'KMSKS' region motif lies at 266 to 270 (KMSKS). Lysine 269 contributes to the ATP binding site. A Phosphoserine modification is found at serine 270.

It belongs to the class-I aminoacyl-tRNA synthetase family. In terms of assembly, monomer. Zn(2+) serves as cofactor.

The protein localises to the cytoplasm. The catalysed reaction is tRNA(Cys) + L-cysteine + ATP = L-cysteinyl-tRNA(Cys) + AMP + diphosphate. This Halalkalibacterium halodurans (strain ATCC BAA-125 / DSM 18197 / FERM 7344 / JCM 9153 / C-125) (Bacillus halodurans) protein is Cysteine--tRNA ligase (cysS).